A 465-amino-acid chain; its full sequence is Glucose-1-phosphate adenylyltransferase (465 aa).

Alpha-D-glucose 1-phosphate is bound by residues Gly164, 181–182 (EK), and Ser199.

This sequence belongs to the bacterial/plant glucose-1-phosphate adenylyltransferase family. In terms of assembly, homotetramer.

The catalysed reaction is alpha-D-glucose 1-phosphate + ATP + H(+) = ADP-alpha-D-glucose + diphosphate. The protein operates within glycan biosynthesis; glycogen biosynthesis. In terms of biological role, involved in the biosynthesis of ADP-glucose, a building block required for the elongation reactions to produce glycogen. Catalyzes the reaction between ATP and alpha-D-glucose 1-phosphate (G1P) to produce pyrophosphate and ADP-Glc. This Arthrobacter sp. (strain FB24) protein is Glucose-1-phosphate adenylyltransferase.